The sequence spans 595 residues: Solute carrier family 13 member 1 (595 aa).

The next 5 helical transmembrane spans lie at 13–33 (FLFV…LHTK), 41–61 (LFVV…TALL), 77–97 (VASA…CLAT), 108–128 (IALK…LGFM), and 131–151 (TAFL…MPIA). N-linked (GlcNAc...) asparagine glycans are attached at residues asparagine 174 and asparagine 207. A run of 8 helical transmembrane segments spans residues 239–259 (LTCL…ITGT), 290–310 (PAAL…FLGF), 348–368 (IVTL…DPGF), 381–401 (GFAT…LIPA), 464–484 (PLGS…VTSL), 491–511 (PATI…IHVN), 512–532 (PLYI…LPVA), and 554–574 (GLGV…TWIV). An N-linked (GlcNAc...) asparagine glycan is attached at asparagine 591.

It belongs to the SLC13A/DASS transporter (TC 2.A.47) family. NADC subfamily. Highly expressed in kidney; not detectable in the other tissues tested.

The protein resides in the apical cell membrane. It catalyses the reaction sulfate(out) + 3 Na(+)(out) = sulfate(in) + 3 Na(+)(in). It carries out the reaction selenate(out) + 3 Na(+)(out) = selenate(in) + 3 Na(+)(in). The catalysed reaction is thiosulfate(out) + 3 Na(+)(out) = thiosulfate(in) + 3 Na(+)(in). With respect to regulation, inhibited by thiosulfate, selenate, molybdate, tungstate, citrate and succinate. Functionally, sodium:sulfate symporter that mediates sulfate reabsorption in the kidney and small intestine. Can also mediate the transport of selenate and thiosulfate. The protein is Solute carrier family 13 member 1 (SLC13A1) of Homo sapiens (Human).